The sequence spans 214 residues: Holliday junction branch migration complex subunit RuvA (214 aa).

Residues 1–67 (MVGWLKGLIV…ADNWQFFGFK (67 aa)) form a domain I region. The tract at residues 68-146 (STQERDIFRE…AFAGMDPAPS (79 aa)) is domain II. Residues 147–154 (LAEGVSSE) are flexible linker. Positions 155-214 (QMPESGADVEATLSMLGYDDLEVRRAIRAIAEGSDGPPPPGDDQDAWLRGCLQWLSRDSA) are domain III.

The protein belongs to the RuvA family. As to quaternary structure, homotetramer. Forms an RuvA(8)-RuvB(12)-Holliday junction (HJ) complex. HJ DNA is sandwiched between 2 RuvA tetramers; dsDNA enters through RuvA and exits via RuvB. An RuvB hexamer assembles on each DNA strand where it exits the tetramer. Each RuvB hexamer is contacted by two RuvA subunits (via domain III) on 2 adjacent RuvB subunits; this complex drives branch migration. In the full resolvosome a probable DNA-RuvA(4)-RuvB(12)-RuvC(2) complex forms which resolves the HJ.

The protein resides in the cytoplasm. Its function is as follows. The RuvA-RuvB-RuvC complex processes Holliday junction (HJ) DNA during genetic recombination and DNA repair, while the RuvA-RuvB complex plays an important role in the rescue of blocked DNA replication forks via replication fork reversal (RFR). RuvA specifically binds to HJ cruciform DNA, conferring on it an open structure. The RuvB hexamer acts as an ATP-dependent pump, pulling dsDNA into and through the RuvAB complex. HJ branch migration allows RuvC to scan DNA until it finds its consensus sequence, where it cleaves and resolves the cruciform DNA. The sequence is that of Holliday junction branch migration complex subunit RuvA from Synechococcus sp. (strain CC9605).